The following is a 121-amino-acid chain: LOB domain-containing protein 23 (121 aa).

Residues 4 to 105 (KRCAACKYLR…NELAKTQAEI (102 aa)) enclose the LOB domain.

It belongs to the LOB domain-containing protein family.

This chain is LOB domain-containing protein 23 (LBD23), found in Arabidopsis thaliana (Mouse-ear cress).